A 348-amino-acid polypeptide reads, in one-letter code: MTAPSQVLKIRRPDDWHLHLRDGDMLKTVVPYTSEIYGRAIVMPNLAPPVTTVEAAVAYRQRILDAVPAGHDFSPLMTCYLTDSLDPNELERGFNEGVFTAAKLYPANATTNSSHGVTSVDAIMPVLERMEKIGMPLLVHGEVTHADIDIFDREARFIESVMEPLRQRLTALKVVFEHITTKDAADYVRNGNERLAATITPQHLMFNRNHMLVGGVRPHLYCLPILKRNIHQQALRELVASGFNRVFLGTDSAPHARHRKESSCGCAGCFNAPTALGSYATVFEEMNALQHFEAFCSVNGPQFYGLPVNDTFIELVREEQQVAESIALTDDTLVPFLAGETVRWSVKQ.

Positions 17 and 19 each coordinate Zn(2+). Residues 19-21 and asparagine 45 each bind substrate; that span reads HLR. Positions 103, 140, and 178 each coordinate Zn(2+). The residue at position 103 (lysine 103) is an N6-carboxylysine. Histidine 140 serves as a coordination point for substrate. Position 223 (leucine 223) interacts with substrate. Aspartate 251 contributes to the Zn(2+) binding site. Aspartate 251 is an active-site residue. Histidine 255 and alanine 267 together coordinate substrate.

This sequence belongs to the metallo-dependent hydrolases superfamily. DHOase family. Class II DHOase subfamily. In terms of assembly, homodimer. Zn(2+) is required as a cofactor.

It catalyses the reaction (S)-dihydroorotate + H2O = N-carbamoyl-L-aspartate + H(+). It participates in pyrimidine metabolism; UMP biosynthesis via de novo pathway; (S)-dihydroorotate from bicarbonate: step 3/3. Its function is as follows. Catalyzes the reversible cyclization of carbamoyl aspartate to dihydroorotate. This Escherichia coli O17:K52:H18 (strain UMN026 / ExPEC) protein is Dihydroorotase.